We begin with the raw amino-acid sequence, 323 residues long: Aldo-keto reductase family 1 member C1 (323 aa).

Residues 20-24 (GFGTY) and Asp-50 each bind NADP(+). Tyr-24 lines the substrate pocket. Tyr-55 serves as the catalytic Proton donor. Position 117 (His-117) interacts with substrate. NADP(+) contacts are provided by residues 166 to 167 (SN), Gln-190, and 216 to 222 (YSALGSH). Substrate-binding residues include His-222 and Trp-227. 270-280 (KSYNEQRIRQN) lines the NADP(+) pocket.

The protein belongs to the aldo/keto reductase family. In terms of assembly, monomer. In terms of tissue distribution, expressed in all tissues tested including liver, prostate, testis, adrenal gland, brain, uterus, mammary gland and keratinocytes. Highest levels found in liver, mammary gland and brain.

Its subcellular location is the cytoplasm. It localises to the cytosol. It catalyses the reaction a 3alpha-hydroxysteroid + NADP(+) = a 3-oxosteroid + NADPH + H(+). It carries out the reaction a 3alpha-hydroxysteroid + NAD(+) = a 3-oxosteroid + NADH + H(+). The enzyme catalyses (17R,20S)-17,20-dihydroxypregn-4-en-3-one + NADP(+) = 17alpha-hydroxyprogesterone + NADPH + H(+). The catalysed reaction is (17R,20S)-17,20-dihydroxypregn-4-en-3-one + NAD(+) = 17alpha-hydroxyprogesterone + NADH + H(+). It catalyses the reaction (20S)-hydroxypregn-4-en-3-one + NADP(+) = progesterone + NADPH + H(+). It carries out the reaction (20S)-hydroxypregn-4-en-3-one + NAD(+) = progesterone + NADH + H(+). The enzyme catalyses (1R,2R)-1,2-dihydrobenzene-1,2-diol + NADP(+) = catechol + NADPH + H(+). The catalysed reaction is (S)-indan-1-ol + NAD(+) = indan-1-one + NADH + H(+). It catalyses the reaction (S)-indan-1-ol + NADP(+) = indan-1-one + NADPH + H(+). It carries out the reaction 5alpha-androstane-3alpha,17beta-diol + NADP(+) = 17beta-hydroxy-5alpha-androstan-3-one + NADPH + H(+). The enzyme catalyses 5alpha-androstane-3beta,17beta-diol + NADP(+) = 17beta-hydroxy-5alpha-androstan-3-one + NADPH + H(+). The catalysed reaction is 5alpha-androstane-3alpha,17beta-diol + NAD(+) = 17beta-hydroxy-5alpha-androstan-3-one + NADH + H(+). It catalyses the reaction 17beta-hydroxy-5alpha-androstan-3-one + NADP(+) = 5alpha-androstan-3,17-dione + NADPH + H(+). It carries out the reaction androsterone + NADP(+) = 5alpha-androstan-3,17-dione + NADPH + H(+). The enzyme catalyses androsterone + NADPH + H(+) = 5alpha-androstane-3alpha,17beta-diol + NADP(+). The catalysed reaction is 5alpha-androstane-3alpha,17beta-diol + NAD(+) = androsterone + NADH + H(+). It catalyses the reaction 17beta-estradiol + NADP(+) = estrone + NADPH + H(+). It carries out the reaction 17beta-estradiol + NAD(+) = estrone + NADH + H(+). The enzyme catalyses testosterone + NADP(+) = androst-4-ene-3,17-dione + NADPH + H(+). The catalysed reaction is 20alpha-hydroxy-5beta-pregnan-3-one + NADP(+) = 5beta-pregnan-3,20-dione + NADPH + H(+). It catalyses the reaction 3beta-hydroxy-5beta-pregnane-20-one + NADP(+) = 5beta-pregnan-3,20-dione + NADPH + H(+). It carries out the reaction 3beta-hydroxy-5beta-pregnane-20-one + NADPH + H(+) = 3beta,20alpha-dihydroxy-5beta-pregnane + NADP(+). The enzyme catalyses (3beta,5alpha,17beta)-3-hydroxyandrostan-17-yl sulfate + NADP(+) = 5alpha-dihydrotestosterone sulfate + NADPH + H(+). It participates in steroid metabolism. Its activity is regulated as follows. Inhibited by hexestrol with an IC(50) of 9.5 uM, 1,10-phenanthroline with an IC(50) of 55 uM, 1,7-phenanthroline with an IC(50) of 72 uM, flufenamic acid with an IC(50) of 6.0 uM, indomethacin with an IC(50) of 140 uM, ibuprofen with an IC(50) of 950 uM, lithocholic acid with an IC(50) of 25 uM, ursodeoxycholic acid with an IC(50) of 340 uM and chenodeoxycholic acid with an IC(50) of 570 uM. The oxidation reaction is inhibited by low micromolar concentrations of NADPH. Functionally, cytosolic aldo-keto reductase that catalyzes the NADH and NADPH-dependent reduction of ketosteroids to hydroxysteroids. Most probably acts as a reductase in vivo since the oxidase activity measured in vitro is inhibited by physiological concentrations of NADPH. Displays a broad positional specificity acting on positions 3, 17 and 20 of steroids and regulates the metabolism of hormones like estrogens and androgens. May also reduce conjugated steroids such as 5alpha-dihydrotestosterone sulfate. Displays affinity for bile acids. The chain is Aldo-keto reductase family 1 member C1 (AKR1C1) from Homo sapiens (Human).